Here is a 307-residue protein sequence, read N- to C-terminus: Mycothiol acetyltransferase (307 aa).

2 N-acetyltransferase domains span residues 15–158 and 164–307; these read HTLD…LAEP and VTVR…RTES. Glutamate 46 is a 1D-myo-inositol 2-(L-cysteinylamino)-2-deoxy-alpha-D-glucopyranoside binding site. 90 to 92 lines the acetyl-CoA pocket; the sequence is LVV. Glutamate 191, lysine 230, and glutamate 239 together coordinate 1D-myo-inositol 2-(L-cysteinylamino)-2-deoxy-alpha-D-glucopyranoside. Residues 243 to 245 and 250 to 256 contribute to the acetyl-CoA site; these read VGV and QGGGLGK. Tyrosine 277 contacts 1D-myo-inositol 2-(L-cysteinylamino)-2-deoxy-alpha-D-glucopyranoside.

It belongs to the acetyltransferase family. MshD subfamily. As to quaternary structure, monomer.

The catalysed reaction is 1D-myo-inositol 2-(L-cysteinylamino)-2-deoxy-alpha-D-glucopyranoside + acetyl-CoA = mycothiol + CoA + H(+). In terms of biological role, catalyzes the transfer of acetyl from acetyl-CoA to desacetylmycothiol (Cys-GlcN-Ins) to form mycothiol. In Streptomyces griseus subsp. griseus (strain JCM 4626 / CBS 651.72 / NBRC 13350 / KCC S-0626 / ISP 5235), this protein is Mycothiol acetyltransferase.